Consider the following 402-residue polypeptide: Phosphomevalonate dehydratase large subunit (402 aa).

(R)-5-phosphomevalonate contacts are provided by glycine 48, alanine 49, serine 50, asparagine 79, and proline 80. Cysteine 122 provides a ligand contact to [4Fe-4S] cluster. 2 residues coordinate (R)-5-phosphomevalonate: glutamate 145 and serine 146. Residues cysteine 297 and cysteine 356 each contribute to the [4Fe-4S] cluster site. Lysine 377 lines the (R)-5-phosphomevalonate pocket.

It belongs to the AcnX type II large subunit family. In terms of assembly, heterodimer composed of a large subunit (PMDh-L) and a small subunit (PMDh-S). [4Fe-4S] cluster is required as a cofactor.

The enzyme catalyses (R)-5-phosphomevalonate = (2E)-3-methyl-5-phosphooxypent-2-enoate + H2O. It participates in isoprenoid biosynthesis; isopentenyl diphosphate biosynthesis via mevalonate pathway. With respect to regulation, neither the addition of 1 mM Mg(2+) nor 1 mM Mn(2+) has a significant effect on the activity, whereas Zn(2+) causes almost complete inactivation. Strongly inhibited by H(2)O(2), but not by EDTA or iodoacetamide. Component of a hydro-lyase that catalyzes the dehydration of mevalonate 5-phosphate (MVA5P) to form trans-anhydromevalonate 5-phosphate (tAHMP). Involved in the archaeal mevalonate (MVA) pathway, which provides fundamental precursors for isoprenoid biosynthesis, such as isopentenyl diphosphate (IPP) and dimethylallyl diphosphate (DMAPP). This chain is Phosphomevalonate dehydratase large subunit, found in Aeropyrum pernix (strain ATCC 700893 / DSM 11879 / JCM 9820 / NBRC 100138 / K1).